The following is a 416-amino-acid chain: MSLVAIGINHKTATVDLREKVAFAPDRIHDAMKSLATHTQSGEAVIISTCNRTELYCNNGEEADVVQWLEDYHQLSHADVEPCLYQFKDQEAVKHLMRVSAGLDSLILGEPQILGQVKQSFVKAKEAGTVATTMDRLFQNTFSVAKKIRTETEIGAAAVSVAFAAVSMAKHIFSSLSTTQVLLVGAGETIELVARHLKDNGVKTMVVANRTISRAEAMCDEFGATAITLEQIPDFLPKADIVISSTASPLPILGKGMVEKALKQRRHQPMLLVDIAVPRDIEAEVADLDDAFLYTVDDLQSIIEQNMASRREAAEQAELIADDQSYQFMEWIRSLESVDSIREYRTQSMAIKDELVERAVNKLAQGGNSEQVLLELANKLTNKLIHAPTQALTAASRQGDLNSLGQLRTMLGLDKD.

Substrate is bound by residues 49–52, serine 105, 110–112, and glutamine 116; these read TCNR and EPQ. The active-site Nucleophile is cysteine 50. 185-190 provides a ligand contact to NADP(+); it reads GAGETI.

The protein belongs to the glutamyl-tRNA reductase family. In terms of assembly, homodimer.

The enzyme catalyses (S)-4-amino-5-oxopentanoate + tRNA(Glu) + NADP(+) = L-glutamyl-tRNA(Glu) + NADPH + H(+). It functions in the pathway porphyrin-containing compound metabolism; protoporphyrin-IX biosynthesis; 5-aminolevulinate from L-glutamyl-tRNA(Glu): step 1/2. Catalyzes the NADPH-dependent reduction of glutamyl-tRNA(Glu) to glutamate 1-semialdehyde (GSA). In Shewanella piezotolerans (strain WP3 / JCM 13877), this protein is Glutamyl-tRNA reductase.